Reading from the N-terminus, the 109-residue chain is Phosphoribosyl-ATP pyrophosphatase (109 aa).

The protein belongs to the PRA-PH family.

The protein resides in the cytoplasm. The enzyme catalyses 1-(5-phospho-beta-D-ribosyl)-ATP + H2O = 1-(5-phospho-beta-D-ribosyl)-5'-AMP + diphosphate + H(+). Its pathway is amino-acid biosynthesis; L-histidine biosynthesis; L-histidine from 5-phospho-alpha-D-ribose 1-diphosphate: step 2/9. This chain is Phosphoribosyl-ATP pyrophosphatase, found in Paramagnetospirillum magneticum (strain ATCC 700264 / AMB-1) (Magnetospirillum magneticum).